A 445-amino-acid chain; its full sequence is Trigger factor (445 aa).

Residues 166 to 251 (GDVVVVDFVG…AKALKRPVDV (86 aa)) enclose the PPIase FKBP-type domain.

It belongs to the FKBP-type PPIase family. Tig subfamily.

Its subcellular location is the cytoplasm. It carries out the reaction [protein]-peptidylproline (omega=180) = [protein]-peptidylproline (omega=0). Functionally, involved in protein export. Acts as a chaperone by maintaining the newly synthesized protein in an open conformation. Functions as a peptidyl-prolyl cis-trans isomerase. The protein is Trigger factor of Gluconacetobacter diazotrophicus (strain ATCC 49037 / DSM 5601 / CCUG 37298 / CIP 103539 / LMG 7603 / PAl5).